A 293-amino-acid chain; its full sequence is Movement protein BC1 (293 aa).

Residues 207–228 (SWASRSTIGPSPSYAGSDQGDA) are disordered. Residues 209–222 (ASRSTIGPSPSYAG) are compositionally biased toward polar residues.

It belongs to the begomovirus movement protein BC1 family. Binds to dimeric supercoiled plasmid DNA. Post-translationally, phosphorylated.

It is found in the host cell membrane. The protein resides in the host microsome membrane. The protein localises to the host endoplasmic reticulum membrane. Functionally, movement protein involved in the cell-to-cell and systemic transport of viral genomic DNA. Begomoviruses use 2 proteins to transport their DNA from cell to cell. The nuclear shuttle protein (NSP) shuttles it between nucleus and cytoplasm and the movement protein (MP) probably transports the DNA-NSP complex to the cell periphery and facilitates further movement across the cell wall. The chain is Movement protein BC1 from Tomato golden mosaic virus (strain Yellow vein) (TGMV).